Consider the following 71-residue polypeptide: ATP synthase subunit c 1 (71 aa).

Helical transmembrane passes span Phe-4–Val-24 and Leu-46–Leu-66.

Belongs to the ATPase C chain family. As to quaternary structure, F-type ATPases have 2 components, F(1) - the catalytic core - and F(0) - the membrane proton channel. F(1) has five subunits: alpha(3), beta(3), gamma(1), delta(1), epsilon(1). F(0) has four main subunits: a(1), b(1), b'(1) and c(10-14). The alpha and beta chains form an alternating ring which encloses part of the gamma chain. F(1) is attached to F(0) by a central stalk formed by the gamma and epsilon chains, while a peripheral stalk is formed by the delta, b and b' chains.

The protein localises to the cell inner membrane. Functionally, f(1)F(0) ATP synthase produces ATP from ADP in the presence of a proton or sodium gradient. F-type ATPases consist of two structural domains, F(1) containing the extramembraneous catalytic core and F(0) containing the membrane proton channel, linked together by a central stalk and a peripheral stalk. During catalysis, ATP synthesis in the catalytic domain of F(1) is coupled via a rotary mechanism of the central stalk subunits to proton translocation. In terms of biological role, key component of the F(0) channel; it plays a direct role in translocation across the membrane. A homomeric c-ring of between 10-14 subunits forms the central stalk rotor element with the F(1) delta and epsilon subunits. The chain is ATP synthase subunit c 1 from Cereibacter sphaeroides (strain ATCC 17029 / ATH 2.4.9) (Rhodobacter sphaeroides).